The chain runs to 86 residues: NADH-ubiquinone oxidoreductase chain 4L (86 aa).

The next 2 membrane-spanning stretches (helical) occupy residues 22–42 (LLVT…LLVY) and 52–72 (FIFL…LVSL).

It belongs to the complex I subunit 4L family.

It is found in the mitochondrion membrane. The catalysed reaction is a ubiquinone + NADH + 5 H(+)(in) = a ubiquinol + NAD(+) + 4 H(+)(out). Functionally, core subunit of the mitochondrial membrane respiratory chain NADH dehydrogenase (Complex I) that is believed to belong to the minimal assembly required for catalysis. Complex I functions in the transfer of electrons from NADH to the respiratory chain. The immediate electron acceptor for the enzyme is believed to be ubiquinone. The polypeptide is NADH-ubiquinone oxidoreductase chain 4L (ND4L) (Artemia salina (Brine shrimp)).